The chain runs to 107 residues: Putative ankyrin repeat protein L14 (107 aa).

3 ANK repeats span residues 19-48, 49-78, and 80-107; these read DNNY…NIRA, DNDC…NIRA, and NDCA…AVLS.

The sequence is that of Putative ankyrin repeat protein L14 from Acanthamoeba polyphaga (Amoeba).